A 552-amino-acid chain; its full sequence is Protein psiB (552 aa).

An N-terminal signal peptide occupies residues 1-18 (MKLLSVLITFLLATVIYS). Residue Asn-60 is glycosylated (N-linked (GlcNAc...) asparagine). Residues 114–255 (TYDTTRNIYV…EDYCGVCQGD (142 aa)) form the PA14 domain. Asn-281, Asn-313, Asn-340, Asn-365, Asn-446, Asn-472, and Asn-521 each carry an N-linked (GlcNAc...) asparagine glycan.

The protein belongs to the prespore-cell-inducing factor family.

It localises to the secreted. This is Protein psiB (psiB) from Dictyostelium discoideum (Social amoeba).